The sequence spans 274 residues: Large ribosomal subunit protein uL2cz (274 aa).

Disordered regions lie at residues 1–25 (MAIH…VKSN) and 224–274 (NPVD…RRSK). The span at 7–25 (KTSTPSTRNGTVDSQVKSN) shows a compositional bias: polar residues.

Belongs to the universal ribosomal protein uL2 family. In terms of assembly, part of the 50S ribosomal subunit.

Its subcellular location is the plastid. It is found in the chloroplast. The chain is Large ribosomal subunit protein uL2cz (rpl2-A) from Atropa belladonna (Belladonna).